The sequence spans 184 residues: Large ribosomal subunit protein uL6 (184 aa).

It belongs to the universal ribosomal protein uL6 family. In terms of assembly, part of the 50S ribosomal subunit.

Its function is as follows. This protein binds to the 23S rRNA, and is important in its secondary structure. It is located near the subunit interface in the base of the L7/L12 stalk, and near the tRNA binding site of the peptidyltransferase center. This chain is Large ribosomal subunit protein uL6, found in Thermotoga petrophila (strain ATCC BAA-488 / DSM 13995 / JCM 10881 / RKU-1).